Reading from the N-terminus, the 167-residue chain is Transcription antitermination protein NusB (167 aa).

Residues M1–N21 are disordered.

It belongs to the NusB family.

Involved in transcription antitermination. Required for transcription of ribosomal RNA (rRNA) genes. Binds specifically to the boxA antiterminator sequence of the ribosomal RNA (rrn) operons. This Nitrosomonas eutropha (strain DSM 101675 / C91 / Nm57) protein is Transcription antitermination protein NusB.